The chain runs to 225 residues: NAD(P)H-quinone oxidoreductase subunit K, chloroplastic (225 aa).

[4Fe-4S] cluster-binding residues include C43, C44, C108, and C139.

It belongs to the complex I 20 kDa subunit family. NDH is composed of at least 16 different subunits, 5 of which are encoded in the nucleus. Requires [4Fe-4S] cluster as cofactor.

It is found in the plastid. It localises to the chloroplast thylakoid membrane. It carries out the reaction a plastoquinone + NADH + (n+1) H(+)(in) = a plastoquinol + NAD(+) + n H(+)(out). It catalyses the reaction a plastoquinone + NADPH + (n+1) H(+)(in) = a plastoquinol + NADP(+) + n H(+)(out). Functionally, NDH shuttles electrons from NAD(P)H:plastoquinone, via FMN and iron-sulfur (Fe-S) centers, to quinones in the photosynthetic chain and possibly in a chloroplast respiratory chain. The immediate electron acceptor for the enzyme in this species is believed to be plastoquinone. Couples the redox reaction to proton translocation, and thus conserves the redox energy in a proton gradient. The sequence is that of NAD(P)H-quinone oxidoreductase subunit K, chloroplastic from Arabis hirsuta (Hairy rock-cress).